Here is a 133-residue protein sequence, read N- to C-terminus: Ribonuclease P protein component (133 aa).

The protein belongs to the RnpA family. In terms of assembly, consists of a catalytic RNA component (M1 or rnpB) and a protein subunit.

The enzyme catalyses Endonucleolytic cleavage of RNA, removing 5'-extranucleotides from tRNA precursor.. RNaseP catalyzes the removal of the 5'-leader sequence from pre-tRNA to produce the mature 5'-terminus. It can also cleave other RNA substrates such as 4.5S RNA. The protein component plays an auxiliary but essential role in vivo by binding to the 5'-leader sequence and broadening the substrate specificity of the ribozyme. This Pseudomonas putida (strain ATCC 47054 / DSM 6125 / CFBP 8728 / NCIMB 11950 / KT2440) protein is Ribonuclease P protein component.